The following is a 318-amino-acid chain: Nucleotide-binding protein Jann_0539 (318 aa).

Residue Gly17–Ser24 participates in ATP binding. Asp64–Thr67 lines the GTP pocket. The disordered stretch occupies residues Gly278–Pro318. The span at Arg286–Ala302 shows a compositional bias: basic and acidic residues.

Belongs to the RapZ-like family.

Its function is as follows. Displays ATPase and GTPase activities. In Jannaschia sp. (strain CCS1), this protein is Nucleotide-binding protein Jann_0539.